Reading from the N-terminus, the 346-residue chain is Elongation factor Ts (346 aa).

The segment at 80-83 (TDFV) is involved in Mg(2+) ion dislocation from EF-Tu.

Belongs to the EF-Ts family.

The protein resides in the cytoplasm. In terms of biological role, associates with the EF-Tu.GDP complex and induces the exchange of GDP to GTP. It remains bound to the aminoacyl-tRNA.EF-Tu.GTP complex up to the GTP hydrolysis stage on the ribosome. This chain is Elongation factor Ts, found in Streptococcus uberis (strain ATCC BAA-854 / 0140J).